A 325-amino-acid polypeptide reads, in one-letter code: Heat-inducible transcription repressor HrcA (325 aa).

The protein belongs to the HrcA family.

Its function is as follows. Negative regulator of class I heat shock genes (grpE-dnaK-dnaJ and groELS operons). Prevents heat-shock induction of these operons. This is Heat-inducible transcription repressor HrcA from Staphylococcus aureus (strain bovine RF122 / ET3-1).